The sequence spans 156 residues: Small ribosomal subunit protein uS7 (156 aa).

This sequence belongs to the universal ribosomal protein uS7 family. As to quaternary structure, part of the 30S ribosomal subunit. Contacts proteins S9 and S11.

Functionally, one of the primary rRNA binding proteins, it binds directly to 16S rRNA where it nucleates assembly of the head domain of the 30S subunit. Is located at the subunit interface close to the decoding center, probably blocks exit of the E-site tRNA. The chain is Small ribosomal subunit protein uS7 from Rhodobacter capsulatus (Rhodopseudomonas capsulata).